A 548-amino-acid chain; its full sequence is Chaperonin GroEL (548 aa).

ATP is bound by residues 30-33 (TLGP), lysine 51, 87-91 (DGTTT), glycine 415, 479-481 (NAA), and aspartate 495.

The protein belongs to the chaperonin (HSP60) family. In terms of assembly, forms a cylinder of 14 subunits composed of two heptameric rings stacked back-to-back. Interacts with the co-chaperonin GroES.

It localises to the cytoplasm. It catalyses the reaction ATP + H2O + a folded polypeptide = ADP + phosphate + an unfolded polypeptide.. Functionally, together with its co-chaperonin GroES, plays an essential role in assisting protein folding. The GroEL-GroES system forms a nano-cage that allows encapsulation of the non-native substrate proteins and provides a physical environment optimized to promote and accelerate protein folding. The polypeptide is Chaperonin GroEL (Salmonella arizonae (strain ATCC BAA-731 / CDC346-86 / RSK2980)).